The following is a 273-amino-acid chain: SUMO-1 cysteine protease S273R (273 aa).

Residues histidine 168 and asparagine 187 contribute to the active site. Glutamine 226 serves as a coordination point for substrate. The active-site Nucleophile is the cysteine 232.

The protein belongs to the peptidase C63 family.

Its subcellular location is the host cytoplasm. The protein localises to the virion. In terms of biological role, cysteine protease that plays several role during infection including processing of the structural polyprotein or inhibition of the host immune response. Catalyzes the maturation of the pp220 and pp62 polyprotein precursors into core-shell proteins. Plays a role in the disruption of host pyroptosis via specific cleavage of gasdermin D/GSDMD. In addition, strongly decreases the host cGAS-STING signaling by targeting IKBKE via its enzymatic activity. Also impairs host FOXJ1-mediated antiviral effect via degradation of FOXJ1. The polypeptide is SUMO-1 cysteine protease S273R (Ornithodoros (relapsing fever ticks)).